A 537-amino-acid polypeptide reads, in one-letter code: MTKYIFVTGGVVSGLGKGITSASIGLLMKARGYKTTNIKIDPYINYDAGTMNPYQHGEVFVLDDGGEVDLDLGNYERFLDTELTFDHNITTGKVYSTVIEKERRGEYLGATVQVIPHITDEIKRRIREIAKDYEVVVVEIGGTVGDIESMPFLEAARQMQLEEGRDNVAFVHVTYVPKLKVVGEQKTKPTQHSVKELRSLGIQPDAIVARSEDPLEEAARKKISLFTNVPEEAVISAYDVEDTYEVPLLLEREGLGKYLTKRLKLEDREPDLKDWEKMVAKYKALTETVEIAIVGKYVKLQDSYLSIKEALKHASVSNEVKVKIRWIEAEDVETHGTKLLEGVDGIIIPGGFGARGAEGKIQAIRYARENDIPFLGICFGFQLTVVEFARNVLGMKGAHSTEIDPQTPYPVVDLMPEQRNLDRLGGTMRLGAYPVKIKKGTLAYSLYNKELVYERHRHRWEVNPNYIEALEKAGLVFSGVAGDDERRMEILELPDKRYFIATQFHPEFKSRPMRPAPVFHGLVRAAKEYKQEKNVTH.

The interval 1–265 (MTKYIFVTGG…GKYLTKRLKL (265 aa)) is amidoligase domain. S13 contacts CTP. UTP is bound at residue S13. 14–19 (GLGKGI) lines the ATP pocket. Y54 serves as a coordination point for L-glutamine. D71 is a binding site for ATP. Mg(2+)-binding residues include D71 and E139. CTP is bound by residues 146-148 (DIE), 186-191 (KTKPTQ), and K222. UTP-binding positions include 186–191 (KTKPTQ) and K222. Residues 290–532 (EIAIVGKYVK…VRAAKEYKQE (243 aa)) enclose the Glutamine amidotransferase type-1 domain. G351 is a binding site for L-glutamine. C378 acts as the Nucleophile; for glutamine hydrolysis in catalysis. Residues 379-382 (FGFQ), E402, and R459 contribute to the L-glutamine site. Catalysis depends on residues H505 and E507.

This sequence belongs to the CTP synthase family. As to quaternary structure, homotetramer.

It carries out the reaction UTP + L-glutamine + ATP + H2O = CTP + L-glutamate + ADP + phosphate + 2 H(+). The enzyme catalyses L-glutamine + H2O = L-glutamate + NH4(+). The catalysed reaction is UTP + NH4(+) + ATP = CTP + ADP + phosphate + 2 H(+). Its pathway is pyrimidine metabolism; CTP biosynthesis via de novo pathway; CTP from UDP: step 2/2. Allosterically activated by GTP, when glutamine is the substrate; GTP has no effect on the reaction when ammonia is the substrate. The allosteric effector GTP functions by stabilizing the protein conformation that binds the tetrahedral intermediate(s) formed during glutamine hydrolysis. Inhibited by the product CTP, via allosteric rather than competitive inhibition. Catalyzes the ATP-dependent amination of UTP to CTP with either L-glutamine or ammonia as the source of nitrogen. Regulates intracellular CTP levels through interactions with the four ribonucleotide triphosphates. The protein is CTP synthase of Pyrococcus furiosus (strain ATCC 43587 / DSM 3638 / JCM 8422 / Vc1).